The sequence spans 604 residues: Zinc finger protein chinmo (604 aa).

In terms of domain architecture, BTB spans Ala32–Gln98. Disordered regions lie at residues Arg122–Ser155, Cys291–His310, Arg330–Thr437, and Asn450–Thr470. Low complexity predominate over residues Pro364–Thr374. Residues Ala384–Leu409 show a composition bias toward polar residues. A compositionally biased stretch (acidic residues) spans Ala425 to Thr437. Residues Ser461–Thr470 are compositionally biased toward low complexity. 2 consecutive C2H2-type zinc fingers follow at residues Leu517–His540 and Val545–His568.

As to expression, broadly expressed in the developing larval central nervous system (at protein level). Expressed in the larval lymph gland and circulating hemocytes (at protein level). Expressed in all cell types of the adult testis stem cell niche but not detected in somatic cells of the adult ovary (at protein level). In the testis, expressed at high levels in cyst stem cells and early cyst cells and, at lower levels, in germline stem cells (at protein level).

The protein resides in the nucleus. Functionally, required for morphological differentiation of postmitotic neurons during postembryonic brain development. Ensures production of appropriate neuron subtypes within a lineage by preventing precocious generation of late neuronal types of that lineage. Acts as a downstream mediator of the transcriptional activator Stat92e and is required for the development of the eye-antennal disk which gives rise to the adult eye, antenna and head capsule, for transcriptional repression of the Notch receptor ligand Ser and for the self-renewal of cyst stem cells in the testis. In the adult testis, maintains the male identify of adult somatic cyst stem cells. Represses expression and alternative splicing of transformer pre-mRNA, resulting in the production of the male-specific isoform of transcription factor dsx which ensures male-specific transcription of target genes. Plays a role in actin nuclear localization through its involvement in repressing the expression of the kinase Cdi. This maintains the cofilin/actin-depolymerizing factor homolog tsr in its unphosphorylated state which is required for actin nuclear import. The chain is Zinc finger protein chinmo from Drosophila melanogaster (Fruit fly).